Consider the following 224-residue polypeptide: ATP phosphoribosyltransferase (224 aa).

The protein belongs to the ATP phosphoribosyltransferase family. Short subfamily. In terms of assembly, heteromultimer composed of HisG and HisZ subunits.

Its subcellular location is the cytoplasm. The catalysed reaction is 1-(5-phospho-beta-D-ribosyl)-ATP + diphosphate = 5-phospho-alpha-D-ribose 1-diphosphate + ATP. It participates in amino-acid biosynthesis; L-histidine biosynthesis; L-histidine from 5-phospho-alpha-D-ribose 1-diphosphate: step 1/9. Its function is as follows. Catalyzes the condensation of ATP and 5-phosphoribose 1-diphosphate to form N'-(5'-phosphoribosyl)-ATP (PR-ATP). Has a crucial role in the pathway because the rate of histidine biosynthesis seems to be controlled primarily by regulation of HisG enzymatic activity. In Cupriavidus metallidurans (strain ATCC 43123 / DSM 2839 / NBRC 102507 / CH34) (Ralstonia metallidurans), this protein is ATP phosphoribosyltransferase.